The primary structure comprises 186 residues: Elongation factor P (186 aa).

Belongs to the elongation factor P family.

It localises to the cytoplasm. It functions in the pathway protein biosynthesis; polypeptide chain elongation. Its function is as follows. Involved in peptide bond synthesis. Stimulates efficient translation and peptide-bond synthesis on native or reconstituted 70S ribosomes in vitro. Probably functions indirectly by altering the affinity of the ribosome for aminoacyl-tRNA, thus increasing their reactivity as acceptors for peptidyl transferase. The polypeptide is Elongation factor P (Brucella ovis (strain ATCC 25840 / 63/290 / NCTC 10512)).